The sequence spans 714 residues: Polyribonucleotide nucleotidyltransferase (714 aa).

Mg(2+) contacts are provided by Asp-489 and Asp-495. A KH domain is found at 556–615 (PKIDTIKIDVDKIKVVIGKGGETIDKIIAETGVKIDIDEEGNVSIYSSDQDAINRAKEII). One can recognise an S1 motif domain in the interval 625-693 (GEVYHAKVVR…DKGRIDASMK (69 aa)). Residues 691 to 714 (SMKALVPRPPKPEKSEAKKEGKHD) are disordered. Basic and acidic residues predominate over residues 700–714 (PKPEKSEAKKEGKHD).

Belongs to the polyribonucleotide nucleotidyltransferase family. It depends on Mg(2+) as a cofactor.

The protein resides in the cytoplasm. It carries out the reaction RNA(n+1) + phosphate = RNA(n) + a ribonucleoside 5'-diphosphate. Involved in mRNA degradation. Catalyzes the phosphorolysis of single-stranded polyribonucleotides processively in the 3'- to 5'-direction. The chain is Polyribonucleotide nucleotidyltransferase from Streptococcus equi subsp. equi (strain 4047).